The primary structure comprises 226 residues: UPF0173 metal-dependent hydrolase GFO_2312 (226 aa).

This sequence belongs to the UPF0173 family.

In Christiangramia forsetii (strain DSM 17595 / CGMCC 1.15422 / KT0803) (Gramella forsetii), this protein is UPF0173 metal-dependent hydrolase GFO_2312.